The chain runs to 717 residues: Mitotic spindle assembly checkpoint protein MAD1 (717 aa).

Methionine 1 is subject to N-acetylmethionine. Residue serine 16 is modified to Phosphoserine. A coiled-coil region spans residues 46-631; the sequence is EQSMQLEERA…QTKIQEFRKV (586 aa). An N6-acetyllysine; alternate modification is found at lysine 61. A Glycyl lysine isopeptide (Lys-Gly) (interchain with G-Cter in SUMO2); alternate cross-link involves residue lysine 61. The Nuclear localization signal signature appears at 79 to 82; that stretch reads KRAR. Phosphoserine is present on residues serine 214 and serine 428. The interval 380-532 is necessary for interaction with NEK2; the sequence is LLEERKKREI…EMQMERLTLQ (153 aa). A necessary for interaction with MAD2L1 region spans residues 540–551; sequence TKVLHMSLNPAS.

This sequence belongs to the MAD1 family. In terms of assembly, homodimer. Dimerizes via its N- and C- terminal regions. Heterodimerizes with MAD2L1 in order to form a tetrameric MAD1L1-MAD2L1 core complex. Interacts with the closed conformation form of MAD2L1 (C-MAD2) and open conformation form of MAD2L1 (O-MAD2). It is unclear whether MAD1L1 dimerization promotes the conversion of closed to open conformation of MAD2L1. Formation of a heterotetrameric core complex containing two molecules each of MAD1L1 and of MAD2L1 promotes binding of another molecule of MAD2L1 to each MAD2L1, resulting in a heterohexamer. Perturbation of the original MAD1L1-MAD2L1 structure by the spindle checkpoint may decrease MAD2L1 affinity for MAD1L1. CDC20 can compete with MAD1L1 for MAD2L1 binding, until the attachment and/or tension dampen the checkpoint signal, preventing further release of MAD2L1 on to CDC20. Also able to interact with the BUB1/BUB3 complex. Interacts with NEK2. Interacts with TTK. Interacts with TPR; the interactions occurs in a microtubule-independent manner. Interacts with IK. Interacts with the viral Tax protein. Interacts with PRAP1. Phosphorylated; by BUB1. Become hyperphosphorylated in late S through M phases or after mitotic spindle damage.

The protein resides in the nucleus. It localises to the chromosome. Its subcellular location is the centromere. It is found in the kinetochore. The protein localises to the nucleus envelope. The protein resides in the cytoplasm. It localises to the cytoskeleton. Its subcellular location is the microtubule organizing center. It is found in the centrosome. The protein localises to the spindle. The protein resides in the spindle pole. In terms of biological role, component of the spindle-assembly checkpoint that prevents the onset of anaphase until all chromosomes are properly aligned at the metaphase plate. Forms a heterotetrameric complex with the closed conformation form of MAD2L1 (C-MAD2) at unattached kinetochores during prometaphase, recruits an open conformation of MAD2L1 (O-MAD2) and promotes the conversion of O-MAD2 to C-MAD2, which ensures mitotic checkpoint signaling. The chain is Mitotic spindle assembly checkpoint protein MAD1 (MAD1L1) from Cricetulus griseus (Chinese hamster).